The primary structure comprises 578 residues: A-type ATP synthase subunit A (578 aa).

ATP is bound at residue 228-235 (GPFGSGKT).

The protein belongs to the ATPase alpha/beta chains family. As to quaternary structure, has multiple subunits with at least A(3), B(3), C, D, E, F, H, I and proteolipid K(x).

The protein resides in the cell membrane. The enzyme catalyses ATP + H2O + 4 H(+)(in) = ADP + phosphate + 5 H(+)(out). In terms of biological role, produces ATP from ADP in the presence of a proton gradient across the membrane. The archaeal alpha chain is a catalytic subunit. Functionally, component of the A-type ATP synthase that produces ATP from ADP in the presence of a proton gradient across the membrane. The A chain is the catalytic subunit. This is A-type ATP synthase subunit A from Methanosarcina barkeri.